We begin with the raw amino-acid sequence, 872 residues long: DNA mismatch repair protein MutS (872 aa).

622–629 (GPNMAGKS) is a binding site for ATP.

It belongs to the DNA mismatch repair MutS family.

Its function is as follows. This protein is involved in the repair of mismatches in DNA. It is possible that it carries out the mismatch recognition step. This protein has a weak ATPase activity. This chain is DNA mismatch repair protein MutS, found in Geotalea uraniireducens (strain Rf4) (Geobacter uraniireducens).